Consider the following 491-residue polypeptide: Ketol-acid reductoisomerase (NADP(+)) (491 aa).

Positions Ala15–Ser208 constitute a KARI N-terminal Rossmann domain. Residues Cys45 to Gln48, Arg68, Arg76, Ser78, and Asp108 to Gln110 contribute to the NADP(+) site. Residue His132 is part of the active site. Gly158 serves as a coordination point for NADP(+). KARI C-terminal knotted domains lie at Ser209–Gln344 and Tyr345–Met484. Mg(2+) is bound by residues Asp217, Glu221, Glu389, and Glu393. Ser414 provides a ligand contact to substrate.

This sequence belongs to the ketol-acid reductoisomerase family. It depends on Mg(2+) as a cofactor.

It carries out the reaction (2R)-2,3-dihydroxy-3-methylbutanoate + NADP(+) = (2S)-2-acetolactate + NADPH + H(+). The catalysed reaction is (2R,3R)-2,3-dihydroxy-3-methylpentanoate + NADP(+) = (S)-2-ethyl-2-hydroxy-3-oxobutanoate + NADPH + H(+). It participates in amino-acid biosynthesis; L-isoleucine biosynthesis; L-isoleucine from 2-oxobutanoate: step 2/4. Its pathway is amino-acid biosynthesis; L-valine biosynthesis; L-valine from pyruvate: step 2/4. Involved in the biosynthesis of branched-chain amino acids (BCAA). Catalyzes an alkyl-migration followed by a ketol-acid reduction of (S)-2-acetolactate (S2AL) to yield (R)-2,3-dihydroxy-isovalerate. In the isomerase reaction, S2AL is rearranged via a Mg-dependent methyl migration to produce 3-hydroxy-3-methyl-2-ketobutyrate (HMKB). In the reductase reaction, this 2-ketoacid undergoes a metal-dependent reduction by NADPH to yield (R)-2,3-dihydroxy-isovalerate. The chain is Ketol-acid reductoisomerase (NADP(+)) from Escherichia coli O8 (strain IAI1).